A 443-amino-acid chain; its full sequence is Ribosomal protein uS12 methylthiotransferase RimO (443 aa).

An MTTase N-terminal domain is found at 5–115 (PNIGFISLGC…VMKHVHKYVP (111 aa)). [4Fe-4S] cluster contacts are provided by C14, C50, C79, C147, C151, and C154. The 242-residue stretch at 133–374 (LTPKHYAYLK…MQVQQRISAA (242 aa)) folds into the Radical SAM core domain. Positions 377–443 (QQKVGKTLAV…ADEYDLWGTC (67 aa)) constitute a TRAM domain.

Belongs to the methylthiotransferase family. RimO subfamily. [4Fe-4S] cluster serves as cofactor.

The protein localises to the cytoplasm. The enzyme catalyses L-aspartate(89)-[ribosomal protein uS12]-hydrogen + (sulfur carrier)-SH + AH2 + 2 S-adenosyl-L-methionine = 3-methylsulfanyl-L-aspartate(89)-[ribosomal protein uS12]-hydrogen + (sulfur carrier)-H + 5'-deoxyadenosine + L-methionine + A + S-adenosyl-L-homocysteine + 2 H(+). In terms of biological role, catalyzes the methylthiolation of an aspartic acid residue of ribosomal protein uS12. The sequence is that of Ribosomal protein uS12 methylthiotransferase RimO from Actinobacillus pleuropneumoniae serotype 7 (strain AP76).